Reading from the N-terminus, the 63-residue chain is Cecropin-B (63 aa).

An N-terminal signal peptide occupies residues 1-22 (MNFNKIFVFVALILAISLGNTE). Arginine 62 bears the Arginine amide mark.

It belongs to the cecropin family.

The protein resides in the secreted. Functionally, cecropins have lytic and antibacterial activity against several Gram-positive and Gram-negative bacteria. In Drosophila simulans (Fruit fly), this protein is Cecropin-B (CecB).